Reading from the N-terminus, the 511-residue chain is 2-isopropylmalate synthase (511 aa).

Positions 6-269 constitute a Pyruvate carboxyltransferase domain; sequence IIIFDTTLRD…YTDIKCENIF (264 aa). Mn(2+)-binding residues include aspartate 15, histidine 203, histidine 205, and asparagine 239. Residues 394–511 form a regulatory domain region; that stretch reads VIEKLSVISG…SLKVEERKMA (118 aa).

The protein belongs to the alpha-IPM synthase/homocitrate synthase family. LeuA type 1 subfamily. As to quaternary structure, homodimer. It depends on Mn(2+) as a cofactor.

It is found in the cytoplasm. The catalysed reaction is 3-methyl-2-oxobutanoate + acetyl-CoA + H2O = (2S)-2-isopropylmalate + CoA + H(+). Its pathway is amino-acid biosynthesis; L-leucine biosynthesis; L-leucine from 3-methyl-2-oxobutanoate: step 1/4. Catalyzes the condensation of the acetyl group of acetyl-CoA with 3-methyl-2-oxobutanoate (2-ketoisovalerate) to form 3-carboxy-3-hydroxy-4-methylpentanoate (2-isopropylmalate). The sequence is that of 2-isopropylmalate synthase from Campylobacter jejuni subsp. jejuni serotype O:23/36 (strain 81-176).